We begin with the raw amino-acid sequence, 95 residues long: Aspartyl/glutamyl-tRNA(Asn/Gln) amidotransferase subunit C (95 aa).

This sequence belongs to the GatC family. As to quaternary structure, heterotrimer of A, B and C subunits.

It carries out the reaction L-glutamyl-tRNA(Gln) + L-glutamine + ATP + H2O = L-glutaminyl-tRNA(Gln) + L-glutamate + ADP + phosphate + H(+). It catalyses the reaction L-aspartyl-tRNA(Asn) + L-glutamine + ATP + H2O = L-asparaginyl-tRNA(Asn) + L-glutamate + ADP + phosphate + 2 H(+). Its function is as follows. Allows the formation of correctly charged Asn-tRNA(Asn) or Gln-tRNA(Gln) through the transamidation of misacylated Asp-tRNA(Asn) or Glu-tRNA(Gln) in organisms which lack either or both of asparaginyl-tRNA or glutaminyl-tRNA synthetases. The reaction takes place in the presence of glutamine and ATP through an activated phospho-Asp-tRNA(Asn) or phospho-Glu-tRNA(Gln). The sequence is that of Aspartyl/glutamyl-tRNA(Asn/Gln) amidotransferase subunit C from Syntrophus aciditrophicus (strain SB).